The primary structure comprises 31 residues: Scolopendra 20566.01 Da toxin (31 aa).

It belongs to the CRISP family. Venom allergen 5-like subfamily. Contains 3 disulfide bonds. As to expression, expressed by the venom gland.

It localises to the secreted. This Scolopendra angulata (Barbados giant red centipede) protein is Scolopendra 20566.01 Da toxin.